A 418-amino-acid chain; its full sequence is Tyrosine--tRNA ligase (418 aa).

Residue Tyr-34 coordinates L-tyrosine. A 'HIGH' region motif is present at residues 39-48; sequence PTADSLHLGH. Positions 169 and 173 each coordinate L-tyrosine. The short motif at 229–233 is the 'KMSKS' region element; sequence KFGKS. ATP is bound at residue Lys-232. An S4 RNA-binding domain is found at 352–418; that stretch reads LNLVDMLVTA…GKKKYAVLTY (67 aa).

This sequence belongs to the class-I aminoacyl-tRNA synthetase family. TyrS type 1 subfamily. Homodimer.

Its subcellular location is the cytoplasm. It catalyses the reaction tRNA(Tyr) + L-tyrosine + ATP = L-tyrosyl-tRNA(Tyr) + AMP + diphosphate + H(+). Its function is as follows. Catalyzes the attachment of tyrosine to tRNA(Tyr) in a two-step reaction: tyrosine is first activated by ATP to form Tyr-AMP and then transferred to the acceptor end of tRNA(Tyr). In Streptococcus pyogenes serotype M12 (strain MGAS2096), this protein is Tyrosine--tRNA ligase.